Reading from the N-terminus, the 981-residue chain is Echinoderm microtubule-associated protein-like 4 (981 aa).

At Met-1 the chain carries N-acetylmethionine. Disordered regions lie at residues 1–20 (MDGF…TSDV) and 57–205 (DHVA…PKLI). The segment at 1-249 (MDGFAGSLDD…IPSDVDNYDD (249 aa)) is microtubule-binding. Phosphoserine occurs at positions 7, 13, 16, and 61. The stretch at 14-63 (AASTSDVQDRLSALESRVQQQEDEITVLKAALADVLRRLAISEDHVASVK) forms a coiled coil. The residue at position 96 (Thr-96) is a Phosphothreonine. The segment covering 114-134 (GTEKKKEKPQGQREKKEESHS) has biased composition (basic and acidic residues). The residue at position 134 (Ser-134) is a Phosphoserine; by NEK7. The span at 137-155 (QSPQIRASPSPQPSSQPLQ) shows a compositional bias: low complexity. A Phosphoserine; by NEK6 modification is found at Ser-144. Phosphoserine; by NEK7 is present on Ser-146. Position 171 is a phosphoserine (Ser-171). A compositionally biased stretch (basic and acidic residues) spans 176-193 (SPAEKSHNSWENSDDSRN). Ser-200 carries the phosphoserine modification. A Phosphothreonine modification is found at Thr-201. Residue Tyr-226 is modified to Phosphotyrosine. A Phosphothreonine modification is found at Thr-237. WD repeat units lie at residues 259–297 (LKLE…LFNY), 301–348 (TQRH…VWDS), 356–396 (IIGL…VWDW), 403–438 (AEIK…FWTW), and 445–484 (RKQG…IWSK). Thr-490 carries the post-translational modification Phosphothreonine; by NEK6. WD repeat units lie at residues 500-538 (QISK…LWDH), 543-579 (EREI…LRGT), 582-621 (DGFQ…LWNS), 625-662 (RLEW…VLDA), 668-704 (VSIH…LYVV), 711-750 (YSRY…YWDI), 760-818 (RSDC…LFQY), and 825-864 (APSH…QWKL). Phosphothreonine; by NEK6 and NEK7 is present on Thr-609. The span at 881 to 893 (LTKAPVSSTESVI) shows a compositional bias: polar residues. The interval 881-981 (LTKAPVSSTE…EDQQDPSPSS (101 aa)) is disordered. Phosphoserine is present on residues Ser-891 and Ser-895. Thr-897 and Thr-899 each carry phosphothreonine. At Ser-903 the chain carries Phosphoserine. Over residues 916–931 (ISSSPTLLENSLEQTV) the composition is skewed to polar residues. Positions 937–946 (HSEEESEEGS) are enriched in acidic residues. Ser-978 is subject to Phosphoserine. Residue Ser-981 is modified to Phosphoserine; by NEK6 and NEK7.

It belongs to the WD repeat EMAP family. In terms of assembly, homotrimer; self-association is mediated by the N-terminal coiled coil. Interacts (via WD repeats) with NUDC. Interacts with alpha- and beta-tubulin during mitosis. Post-translationally, phosphorylated during mitosis. Phosphorylation at Ser-144 and Ser-146 promotes its dissociation from microtubules during mitosis which is required for efficient chromosome congression.

The protein resides in the cytoplasm. Its subcellular location is the cytoskeleton. The protein localises to the spindle. It is found in the microtubule organizing center. It localises to the midbody. In terms of biological role, essential for the formation and stability of microtubules (MTs). Required for the organization of the mitotic spindle and for the proper attachment of kinetochores to MTs. Promotes the recruitment of NUDC to the mitotic spindle for mitotic progression. The polypeptide is Echinoderm microtubule-associated protein-like 4 (EML4) (Homo sapiens (Human)).